We begin with the raw amino-acid sequence, 267 residues long: 4-hydroxy-tetrahydrodipicolinate reductase (267 aa).

NAD(+)-binding positions include 8-13 and D34; that span reads GAAGRM. R35 is a binding site for NADP(+). NAD(+) is bound by residues 98 to 100 and 122 to 125; these read GTT and AANF. H155 serves as the catalytic Proton donor/acceptor. H156 contacts (S)-2,3,4,5-tetrahydrodipicolinate. K159 acts as the Proton donor in catalysis. 165–166 contributes to the (S)-2,3,4,5-tetrahydrodipicolinate binding site; the sequence is GT.

Belongs to the DapB family.

The protein localises to the cytoplasm. The enzyme catalyses (S)-2,3,4,5-tetrahydrodipicolinate + NAD(+) + H2O = (2S,4S)-4-hydroxy-2,3,4,5-tetrahydrodipicolinate + NADH + H(+). The catalysed reaction is (S)-2,3,4,5-tetrahydrodipicolinate + NADP(+) + H2O = (2S,4S)-4-hydroxy-2,3,4,5-tetrahydrodipicolinate + NADPH + H(+). Its pathway is amino-acid biosynthesis; L-lysine biosynthesis via DAP pathway; (S)-tetrahydrodipicolinate from L-aspartate: step 4/4. Its function is as follows. Catalyzes the conversion of 4-hydroxy-tetrahydrodipicolinate (HTPA) to tetrahydrodipicolinate. The protein is 4-hydroxy-tetrahydrodipicolinate reductase of Pseudomonas amygdali pv. tabaci (Pseudomonas syringae pv. tabaci).